The following is a 95-amino-acid chain: Aspartyl/glutamyl-tRNA(Asn/Gln) amidotransferase subunit C (95 aa).

The protein belongs to the GatC family. Heterotrimer of A, B and C subunits.

It carries out the reaction L-glutamyl-tRNA(Gln) + L-glutamine + ATP + H2O = L-glutaminyl-tRNA(Gln) + L-glutamate + ADP + phosphate + H(+). It catalyses the reaction L-aspartyl-tRNA(Asn) + L-glutamine + ATP + H2O = L-asparaginyl-tRNA(Asn) + L-glutamate + ADP + phosphate + 2 H(+). In terms of biological role, allows the formation of correctly charged Asn-tRNA(Asn) or Gln-tRNA(Gln) through the transamidation of misacylated Asp-tRNA(Asn) or Glu-tRNA(Gln) in organisms which lack either or both of asparaginyl-tRNA or glutaminyl-tRNA synthetases. The reaction takes place in the presence of glutamine and ATP through an activated phospho-Asp-tRNA(Asn) or phospho-Glu-tRNA(Gln). This chain is Aspartyl/glutamyl-tRNA(Asn/Gln) amidotransferase subunit C, found in Thioalkalivibrio sulfidiphilus (strain HL-EbGR7).